We begin with the raw amino-acid sequence, 260 residues long: Tropinone reductase 2 (260 aa).

13–37 (LVTGGSRGIGYGIVEELANLGASVY) provides a ligand contact to NADP(+). Ser-146 lines the substrate pocket. Catalysis depends on Tyr-159, which acts as the Proton acceptor.

This sequence belongs to the short-chain dehydrogenases/reductases (SDR) family.

The enzyme catalyses pseudotropine + NADP(+) = tropinone + NADPH + H(+). Its pathway is alkaloid biosynthesis; tropane alkaloid biosynthesis. Functionally, catalyzes the stereospecific reduction of tropinone to pseudotropine. The protein is Tropinone reductase 2 (TR2) of Hyoscyamus niger (Black henbane).